We begin with the raw amino-acid sequence, 318 residues long: Acetyl-coenzyme A carboxylase carboxyl transferase subunit alpha (318 aa).

One can recognise a CoA carboxyltransferase C-terminal domain in the interval 32 to 293; sequence NINEEIQRLE…REALREEWAR (262 aa).

Belongs to the AccA family. As to quaternary structure, acetyl-CoA carboxylase is a heterohexamer composed of biotin carboxyl carrier protein (AccB), biotin carboxylase (AccC) and two subunits each of ACCase subunit alpha (AccA) and ACCase subunit beta (AccD).

It is found in the cytoplasm. The enzyme catalyses N(6)-carboxybiotinyl-L-lysyl-[protein] + acetyl-CoA = N(6)-biotinyl-L-lysyl-[protein] + malonyl-CoA. Its pathway is lipid metabolism; malonyl-CoA biosynthesis; malonyl-CoA from acetyl-CoA: step 1/1. Its function is as follows. Component of the acetyl coenzyme A carboxylase (ACC) complex. First, biotin carboxylase catalyzes the carboxylation of biotin on its carrier protein (BCCP) and then the CO(2) group is transferred by the carboxyltransferase to acetyl-CoA to form malonyl-CoA. In Halorhodospira halophila (strain DSM 244 / SL1) (Ectothiorhodospira halophila (strain DSM 244 / SL1)), this protein is Acetyl-coenzyme A carboxylase carboxyl transferase subunit alpha.